Here is a 475-residue protein sequence, read N- to C-terminus: NADH-quinone oxidoreductase subunit N 1 (475 aa).

14 helical membrane passes run 8–28, 36–56, 67–87, 100–120, 122–142, 157–177, 199–219, 244–264, 268–288, 295–315, 322–342, 366–386, 403–423, and 443–463; these read VMPL…EAAT, LFAI…PSEP, GGFF…ITLI, GEYY…SAAA, LTIL…LAGI, FLLG…IYGA, FLSG…AVPF, AAAL…LETF, PTAI…AALI, MFAY…ATGT, VLYY…IIIL, AFLM…GGFI, LAVA…RVVI, and ATIA…SLLI.

The protein belongs to the complex I subunit 2 family. In terms of assembly, NDH-1 is composed of 14 different subunits. Subunits NuoA, H, J, K, L, M, N constitute the membrane sector of the complex.

The protein localises to the cell inner membrane. The catalysed reaction is a quinone + NADH + 5 H(+)(in) = a quinol + NAD(+) + 4 H(+)(out). In terms of biological role, NDH-1 shuttles electrons from NADH, via FMN and iron-sulfur (Fe-S) centers, to quinones in the respiratory chain. The immediate electron acceptor for the enzyme in this species is believed to be a menaquinone. Couples the redox reaction to proton translocation (for every two electrons transferred, four hydrogen ions are translocated across the cytoplasmic membrane), and thus conserves the redox energy in a proton gradient. The chain is NADH-quinone oxidoreductase subunit N 1 from Chloroherpeton thalassium (strain ATCC 35110 / GB-78).